The primary structure comprises 134 residues: MADTFLLKIVTPDKDIFNGNIKRIFLRNSVGRLEILANHANMVTSTVSSIVEFTDAEGKDRKLFVSKGIASIFNNEMTIFSESAEFSDNIDLNRAEKAKERAEKRLLEGNKYDKERAELALLRSIERINLKKMN.

Belongs to the ATPase epsilon chain family. In terms of assembly, F-type ATPases have 2 components, CF(1) - the catalytic core - and CF(0) - the membrane proton channel. CF(1) has five subunits: alpha(3), beta(3), gamma(1), delta(1), epsilon(1). CF(0) has three main subunits: a, b and c.

The protein localises to the cell membrane. Its function is as follows. Produces ATP from ADP in the presence of a proton gradient across the membrane. In Clostridium botulinum (strain Alaska E43 / Type E3), this protein is ATP synthase epsilon chain.